We begin with the raw amino-acid sequence, 86 residues long: High affinity immunoglobulin epsilon receptor subunit gamma (86 aa).

The first 18 residues, 1 to 18 (MIPAVVLLLLLLVEQAAA), serve as a signal peptide directing secretion. Residues 19 to 23 (LGEPQ) are Extracellular-facing. A helical transmembrane segment spans residues 24–44 (LCYILDAILFLYGIVLTLLYC). The Cytoplasmic portion of the chain corresponds to 45–86 (RLKLQVRKAAIDSYEKSDGVYTGLSTRNQETYETLKHEKPPQ). In terms of domain architecture, ITAM spans 54–82 (AIDSYEKSDGVYTGLSTRNQETYETLKHE). A Phosphotyrosine modification is found at Y65. S69 bears the Phosphoserine mark. A Phosphotyrosine modification is found at Y76. The residue at position 78 (T78) is a Phosphothreonine.

The protein belongs to the CD3Z/FCER1G family. In terms of assembly, igE Fc receptor is a tetramer of an alpha chain, a beta chain, and two disulfide linked gamma chains. Associates with FCGR1A; forms a functional signaling complex. The signaling subunit of immunoglobulin gamma (IgG) Fc receptor complex. As a homodimer or a heterodimer of CD247 and FCER1G, associates with the ligand binding subunit FCGR3A to form a functional receptor complex. Associates with CLEC6A. Interacts with CLEC4E. Interacts (via ITAM domain) with SYK (via SH2 domains); activates SYK, enabling integrin-mediated activation of neutrophils and macrophages. Interacts with common beta chain of interleukin 3 receptor CSF2RB and recruits SYK in response to IL3 stimulation; this interaction is direct. Interacts with CD300LH; the interaction may be indirect. Interacts with CD300LD. Interacts with TARM1.

It localises to the cell membrane. In terms of biological role, adapter protein containing an immunoreceptor tyrosine-based activation motif (ITAM) that transduces activation signals from various immunoreceptors. As a component of the high-affinity immunoglobulin E (IgE) receptor, mediates allergic inflammatory signaling in mast cells. As a constitutive component of interleukin-3 receptor complex, selectively mediates interleukin 4/IL4 production b basophils priming T-cells toward effector T-helper 2 subset. Associates with pattern recognition receptors CLEC4D and CLEC4E to form a functional signaling complex in myeloid cells. Binding of mycobacterial trehalose 6,6'-dimycolate (TDM) to this receptor complex leads to phosphorylation of ITAM, triggering activation of SYK, CARD9 and NF-kappa-B, consequently driving maturation of antigen-presenting cells and shaping antigen-specific priming of T-cells toward effector T-helper 1 and T-helper 17 cell subtypes. May function cooperatively with other activating receptors. Functionally linked to integrin beta-2/ITGB2-mediated neutrophil activation. Also involved in integrin alpha-2/ITGA2-mediated platelet activation. This is High affinity immunoglobulin epsilon receptor subunit gamma (FCER1G) from Sus scrofa (Pig).